The primary structure comprises 1392 residues: Leucine-rich PPR motif-containing protein, mitochondrial (1392 aa).

The N-terminal 77 residues, 1–77 (MSALLRPARW…LPEEPAPVRR (77 aa)), are a transit peptide targeting the mitochondrion. 14 PPR repeats span residues 125-159 (LLRS…GTVY), 160-194 (DVSH…NIQP), 195-229 (NRVT…DLPI), 230-264 (TEAV…GIEP), 265-299 (GPDT…DHYF), 300-334 (MDRD…RRSI), 402-436 (HSSS…GFPI), 437-471 (RTHY…GVDP), 677-708 (VGDP…ESDM), 709-745 (VIGG…SAVL), 746-783 (DTAK…IKDA), 784-820 (AVLS…AKPS), 821-856 (SNIS…VLPR), and 953-987 (RDQM…NLIP). An N6-acetyllysine mark is found at lysine 151 and lysine 186. N6-acetyllysine is present on lysine 291. At lysine 462 the chain carries N6-acetyllysine. Residue lysine 749 is modified to N6-acetyllysine. Phosphoserine occurs at positions 1025, 1026, and 1028. PPR repeat units follow at residues 1030–1064 (GDTV…DVVF), 1065–1101 (SSEA…GFTL), 1102–1136 (NGAA…EQVP), 1137–1173 (SELA…IELS), 1174–1208 (RMVF…ENQT), and 1315–1349 (NDRV…NMKL). Position 1137 is a phosphoserine (serine 1137).

Component of mRNP complexes associated with HNRPA1. Component of the complex, at least composed of LRPPRC, BECN1 and BCL2; the interactions prevent BECN1 from forming an autophagy-inducing complex with PIK3C3. Interacts with CECR2, HEBP2, MAP1S, UXT, PPARGC1A and FOXO1. Interacts (via N-terminus) with EIF4E; the interaction promotes association of EIF4E with 4ESE-containing mRNAs. Interacts with exportin XPO1/CRM1; interacts both alone and in complex with EIF4E and 4ESE-containing mRNAs to form an EIF4E-dependent mRNA export complex. Interacts with importin IPO8; the interaction occurs when LRPPRC is in its RNA-free form and returns LRPPRC to the nucleus for further export rounds. Interacts with BECN1. As to expression, widely expressed. Expressed in liver, brain and a subset of small diameter sensory neurons in the dorsal root ganglion (at protein level).

Its subcellular location is the mitochondrion. The protein localises to the nucleus. It localises to the nucleoplasm. The protein resides in the nucleus inner membrane. It is found in the nucleus outer membrane. Its function is as follows. May play a role in RNA metabolism in both nuclei and mitochondria. In the nucleus binds to HNRPA1-associated poly(A) mRNAs and is part of nmRNP complexes at late stages of mRNA maturation which are possibly associated with nuclear mRNA export. Positively modulates nuclear export of mRNAs containing the EIF4E sensitivity element (4ESE) by binding simultaneously to both EIF4E and the 4ESE and acting as a platform for assembly for the RNA export complex. Also binds to exportin XPO1/CRM1 to engage the nuclear pore and traffic the bound mRNAs to the cytoplasm. May bind mature mRNA in the nucleus outer membrane. In mitochondria binds to poly(A) mRNA. Plays a role in translation or stability of mitochondrially encoded cytochrome c oxidase (COX) subunits. May be involved in transcription regulation. Cooperates with PPARGC1A to regulate certain mitochondrially encoded genes and gluconeogenic genes and may regulate docking of PPARGC1A to transcription factors. Seems to be involved in the transcription regulation of the multidrug-related genes MDR1 and MVP. Part of a nuclear factor that binds to the invMED1 element of MDR1 and MVP gene promoters. Binds single-stranded DNA. Required for maintaining mitochondrial potential. Suppresses the initiation of basal levels of autophagy and mitophagy by sustaining BCL2 levels. This is Leucine-rich PPR motif-containing protein, mitochondrial (Lrpprc) from Rattus norvegicus (Rat).